Consider the following 214-residue polypeptide: Ribosomal RNA small subunit methyltransferase G (214 aa).

S-adenosyl-L-methionine-binding positions include Gly-72, Phe-77, 125-126, and Arg-141; that span reads VE.

It belongs to the methyltransferase superfamily. RNA methyltransferase RsmG family.

It localises to the cytoplasm. It catalyses the reaction guanosine(527) in 16S rRNA + S-adenosyl-L-methionine = N(7)-methylguanosine(527) in 16S rRNA + S-adenosyl-L-homocysteine. Functionally, specifically methylates the N7 position of guanine in position 527 of 16S rRNA. This is Ribosomal RNA small subunit methyltransferase G from Sinorhizobium fredii (strain NBRC 101917 / NGR234).